A 362-amino-acid polypeptide reads, in one-letter code: Probable dual-specificity RNA methyltransferase RlmN (362 aa).

Glu-105 acts as the Proton acceptor in catalysis. A Radical SAM core domain is found at 111–344 (HNYGNSVCVT…VTIRREQGHD (234 aa)). A disulfide bond links Cys-118 and Cys-349. Residues Cys-125, Cys-129, and Cys-132 each coordinate [4Fe-4S] cluster. S-adenosyl-L-methionine contacts are provided by residues 175-176 (GE), Ser-207, 230-232 (SLH), and Asn-306. The active-site S-methylcysteine intermediate is the Cys-349.

It belongs to the radical SAM superfamily. RlmN family. It depends on [4Fe-4S] cluster as a cofactor.

The protein resides in the cytoplasm. The catalysed reaction is adenosine(2503) in 23S rRNA + 2 reduced [2Fe-2S]-[ferredoxin] + 2 S-adenosyl-L-methionine = 2-methyladenosine(2503) in 23S rRNA + 5'-deoxyadenosine + L-methionine + 2 oxidized [2Fe-2S]-[ferredoxin] + S-adenosyl-L-homocysteine. It carries out the reaction adenosine(37) in tRNA + 2 reduced [2Fe-2S]-[ferredoxin] + 2 S-adenosyl-L-methionine = 2-methyladenosine(37) in tRNA + 5'-deoxyadenosine + L-methionine + 2 oxidized [2Fe-2S]-[ferredoxin] + S-adenosyl-L-homocysteine. Functionally, specifically methylates position 2 of adenine 2503 in 23S rRNA and position 2 of adenine 37 in tRNAs. The sequence is that of Probable dual-specificity RNA methyltransferase RlmN from Halalkalibacterium halodurans (strain ATCC BAA-125 / DSM 18197 / FERM 7344 / JCM 9153 / C-125) (Bacillus halodurans).